The following is a 418-amino-acid chain: MLHPRARTMLLLSLPAVAIGIASSLILIVVMKIASVLQNLLWQRLPGTLGIAQDSPLWIIGVLTLTGIAVGLVIRFSQGHAGPDPACEPLIGAPVPPSALPRLIVALILGLAGGVSLGPEHPIMTVNIALAVAIGARLLPRVNRMEWTILASAGTIGALFGTPVAAALIFSQTLNGSSEVPLWDRLFAPLMAAAAGALTTGLFFHPHFSLPIAHYGQMEMTDILSGAIVAAIAIAAGMVAVWCLPRLHAMMNQMKNPVLVLGIGGFILGILGVIGGPVSLFKGLDEMQQMVANQAFSTSDYFLLAVIKLAALVVAAASGFRGGRIFPAVFVGVALGLMLHEHVPAVPAAITVSCAILGIVLVVTRDGWLSLFMAAVVVPNTTLLPLLCIVMLPAWLLLAGKPMMMVNRPKQQPPHDNV.

10 helical membrane passes run 15–37, 57–79, 99–118, 149–171, 186–208, 221–243, 258–280, 301–323, 343–363, and 376–398; these read PAVA…ASVL, LWII…FSQG, ALPR…VSLG, ILAS…LIFS, LFAP…HPHF, TDIL…AVWC, VLVL…PVSL, YFLL…FRGG, VPAV…VLVV, and VVVP…WLLL.

The protein belongs to the chloride channel (TC 2.A.49) family.

Its subcellular location is the cell membrane. The sequence is that of Putative ion-transport protein YfeO (yfeO) from Shigella flexneri.